We begin with the raw amino-acid sequence, 940 residues long: PTS system glucose-specific EIICBA component (940 aa).

Residues 1–284 (MQIKAQDTGQ…YAPLWYTSAG (284 aa)) form the PTS EIIC type-1; first part domain. 5 consecutive transmembrane segments (helical) span residues 43–63 (LMIPIAVLPIAGIFLGVGDAI), 83–103 (GGDVVFANLPILFAIAIAITF), 112–132 (FSAFVFWAAMNGFMSSLILPF), 175–195 (VFGGIIVGALTSVLYKKFYAI), and 209–229 (FVPIICFVVAIPVALILLMIW). The tract at residues 285–478 (GSLQEIVNQQ…VNSFRVAVES (194 aa)) is unknown. Positions 479 to 630 (LNPAQYSQGK…FNLATPGRGG (152 aa)) constitute a PTS EIIC type-1; second part domain. A run of 5 helical transmembrane segments spans residues 487–507 (GKFPFMLFGIPAAGVAMILAA), 515–535 (AASIVGSAAFTSFLTGITEPF), 537–557 (FTFLFLAPWLFYGVHAVLAAV), 564–584 (ILGANVGQTFSGSFIDFILYG), and 598–618 (LVPIIGLFLAAIYFPTFYFLI). Positions 661-743 (QIEAGILLQA…QDIIQGKVNW (83 aa)) constitute a PTS EIIB type-1 domain. The active-site Phosphocysteine intermediate; for EIIB activity is Cys-683. A PTS EIIA type-1 domain is found at 794–907 (DETFKQKLVG…NPITPFVVMK (114 aa)). The active-site Tele-phosphohistidine intermediate; for EIIA activity is His-847.

The protein localises to the cell membrane. The catalysed reaction is N(pros)-phospho-L-histidyl-[protein] + D-glucose(out) = D-glucose 6-phosphate(in) + L-histidyl-[protein]. In terms of biological role, the phosphoenolpyruvate-dependent sugar phosphotransferase system (sugar PTS), a major carbohydrate active transport system, catalyzes the phosphorylation of incoming sugar substrates concomitantly with their translocation across the cell membrane. This system is involved in glucose transport. This is PTS system glucose-specific EIICBA component (ptsG) from Mycoplasma pneumoniae (strain ATCC 29342 / M129 / Subtype 1) (Mycoplasmoides pneumoniae).